A 641-amino-acid polypeptide reads, in one-letter code: WW domain-binding protein 11 (641 aa).

Residues 1-11 (MGRRSTSSTKS) show a composition bias toward polar residues. The tract at residues 1 to 37 (MGRRSTSSTKSGKFMNPTDQARKEARKRELKKNKKQR) is disordered. The interval 1–45 (MGRRSTSSTKSGKFMNPTDQARKEARKRELKKNKKQRMMVRAAVL) is required for nuclear import. N6-acetyllysine is present on lysine 13. The span at 28–37 (RELKKNKKQR) shows a compositional bias: basic residues. A coiled-coil region spans residues 75–133 (EKVLKDKRKKLRETFERILRLYEKENPDIYKELRKLEVEYEQKRAQLSQYFDAVKNAQH). Serine 181 carries the post-translational modification Phosphoserine. The tract at residues 188 to 213 (HGVPRLPPGRKPPGPPPGPPPPQVLQ) is disordered. Arginine 192 carries the omega-N-methylarginine modification. The span at 192-210 (RLPPGRKPPGPPPGPPPPQ) shows a compositional bias: pro residues. Positions 217-221 (RKVGF) are interaction with PP1. Tyrosine 236 bears the Phosphotyrosine mark. The disordered stretch occupies residues 236–550 (YSPELAQRGH…IQRPKADDAS (315 aa)). Serine 237 carries the phosphoserine modification. Over residues 253–263 (SEDDGYPEDMD) the composition is skewed to acidic residues. The segment covering 276–304 (TDRSDAESDGDEFGHREDSERDNTEEKKS) has biased composition (basic and acidic residues). A phosphoserine mark is found at serine 279 and serine 283. The segment at 306 to 310 (LSVRF) is interaction with PP1. A compositionally biased stretch (acidic residues) spans 351 to 365 (EFSEEEDADDSDDSE). 3 positions are modified to phosphoserine: serine 353, serine 361, and serine 364. Residues 366-380 (AEKQSQKQHKDDGHS) show a composition bias toward basic and acidic residues. Low complexity predominate over residues 381–404 (DSTAAASSQQQAPPQSAPASQIQA). Pro residues-rich tracts occupy residues 405 to 447 (PPMP…PPGM), 456 to 504 (RLLP…PPRP), and 510 to 530 (PLVPPLGPAPPGLFPPAPLPN). The PGR motif lies at 455–466 (PRLLPPGPPPGR). Lysine 557 participates in a covalent cross-link: Glycyl lysine isopeptide (Lys-Gly) (interchain with G-Cter in SUMO2). At lysine 565 the chain carries N6-acetyllysine. Lysine 572 participates in a covalent cross-link: Glycyl lysine isopeptide (Lys-Gly) (interchain with G-Cter in SUMO2). The tract at residues 588–620 (ENKGATAVPQRRSEDDSAVPVAKAAPRSGPSVA) is disordered. Serine 600 carries the phosphoserine modification. Positions 633–641 (FMKEMEGLL) are required for nuclear export.

Interacts via the PGR motif with PQBP1 in the nucleus. Interacts with the WW domains of WBP4. Interacts with PPP1CA, PPP1CB and PPP1CC. In terms of tissue distribution, ubiquitously expressed, with highest levels in testis.

It is found in the nucleus. The protein resides in the cytoplasm. Activates pre-mRNA splicing. May inhibit PP1 phosphatase activity. The protein is WW domain-binding protein 11 (Wbp11) of Mus musculus (Mouse).